The chain runs to 78 residues: Large ribosomal subunit protein bL28 (78 aa).

A disordered region spans residues 1–31; it reads MAAHCQVTGAEPGFGHSISHSHRRNKRRFDP.

It belongs to the bacterial ribosomal protein bL28 family.

This chain is Large ribosomal subunit protein bL28, found in Paenarthrobacter aurescens (strain TC1).